The following is a 436-amino-acid chain: Amino acid transporter AVT3C (436 aa).

The span at 1–13 (MGFQNEASSSSYT) shows a compositional bias: polar residues. A disordered region spans residues 1–21 (MGFQNEASSSSYTLKIPPPAR). Topologically, residues 1–38 (MGFQNEASSSSYTLKIPPPAREDSPLLGKGPPLSSQFK) are cytoplasmic. A helical membrane pass occupies residues 39-59 (TFANVFIAVVGAGVLGLPYAF). Residues 60–65 (KRTGWL) lie on the Vacuolar side of the membrane. The helical transmembrane segment at 66–86 (MGVLLLVSVSVLTHHCMMLLV) threads the bilayer. Over 87–118 (YTRRKLDSFNAGISKIGSFGDLGFAVCGSLGR) the chain is Cytoplasmic. The chain crosses the membrane as a helical span at residues 119 to 139 (IVVDLFIILSQAGFCVGYLIF). Residues 140–166 (IGTTLANLSDPESPTSLRHQFTRLGSE) are Vacuolar-facing. Residues 167 to 187 (FLGVSSKSLYIWGCFPFQLGL) traverse the membrane as a helical segment. Topologically, residues 188-195 (NSIKTLTH) are cytoplasmic. A helical membrane pass occupies residues 196 to 216 (LAPLSIFADIVDLGAMAVVIV). At 217-228 (EDSMIILKQRPD) the chain is on the vacuolar side. A helical transmembrane segment spans residues 229–249 (VVAFGGMSLFLYGMGVAVYSF). Residues 250–273 (EGVGMVLPLESEMKDKDKFGKVLA) are Cytoplasmic-facing. The chain crosses the membrane as a helical span at residues 274-294 (LGMGFISLIYIAFGILGYLAF). The Vacuolar portion of the chain corresponds to 295–309 (GEDTMDIITANLGAG). Residues 310–330 (LVSTVVQLGLCINLFFTFPLM) traverse the membrane as a helical segment. Residues 331 to 352 (MNPVFEIVERRFSRGMYSAWLR) are Cytoplasmic-facing. The helical transmembrane segment at 353 to 373 (WVLVLAVTLVALFVPNFADFL) threads the bilayer. Over 374 to 376 (SLV) the chain is Vacuolar. A helical membrane pass occupies residues 377 to 397 (GSSTCCVLGFVLPALFHLLVF). The Cytoplasmic segment spans residues 398-411 (KEEMGWLQWSSDTA). The helical transmembrane segment at 412 to 432 (IVVLGVVLAVSGTWSSLSEIF) threads the bilayer. Residues 433–436 (SVKV) lie on the Vacuolar side of the membrane.

The protein belongs to the amino acid/polyamine transporter 2 family. Amino acid/auxin permease (AAAP) (TC 2.A.18.8) subfamily. As to expression, ubiquitous.

It localises to the vacuole membrane. Functionally, translocates preferentially neutral amino acids from the vacuole to the cytoplasm. This Arabidopsis thaliana (Mouse-ear cress) protein is Amino acid transporter AVT3C.